Here is a 1240-residue protein sequence, read N- to C-terminus: RNA-directed RNA polymerase VP2 (1240 aa).

In terms of domain architecture, RdRp catalytic spans 516 to 764 (LVANYINKHM…KLYALFGARI (249 aa)).

The protein belongs to the reoviridae RNA-directed RNA polymerase family.

Its subcellular location is the virion. The enzyme catalyses RNA(n) + a ribonucleoside 5'-triphosphate = RNA(n+1) + diphosphate. Its function is as follows. RNA-directed RNA polymerase that is involved in transcription and genome replication. Following infection, it catalyzes the synthesis of fully conservative plus strands. After core assembly, which consists in recruitment of one capped plus-strand for each genomic segments and polymerase complexes, the polymerase switches mode and catalyzes the synthesis of complementary minus-strands. The chain is RNA-directed RNA polymerase VP2 (S2) from Oncorhynchus keta (Chum salmon).